Here is a 194-residue protein sequence, read N- to C-terminus: Heme transporter hrg-1 (194 aa).

A run of 4 helical transmembrane segments spans residues 45-65 (QIWIAWLGVSAGVMAGTVFAI), 71-91 (IAVTMCFISSGFATLVLHLHL), 113-133 (GATVSFLSFIAMVFCLVVAGI), and 143-163 (LMGANLWIAAVWFFMTSKWSA). The Di-leucine motif motif lies at 182–183 (LL).

The protein belongs to the HRG family. In terms of tissue distribution, specifically expressed in the intestinal cells in larvae and adults.

It localises to the endosome membrane. It is found in the lysosome membrane. In terms of biological role, heme transporter that regulates intracellular heme availability through the endosomal or lysosomal compartment. This chain is Heme transporter hrg-1 (hrg-1), found in Caenorhabditis elegans.